We begin with the raw amino-acid sequence, 286 residues long: Shikimate dehydrogenase (NADP(+)) (286 aa).

Shikimate-binding positions include 19-21 (SVS) and Thr66. The Proton acceptor role is filled by Lys70. The shikimate site is built by Asn91 and Asp106. Residues 130-134 (GAGGS) and Ala225 each bind NADP(+). A shikimate-binding site is contributed by Tyr227. Gly248 contacts NADP(+).

It belongs to the shikimate dehydrogenase family. As to quaternary structure, homodimer.

The catalysed reaction is shikimate + NADP(+) = 3-dehydroshikimate + NADPH + H(+). It functions in the pathway metabolic intermediate biosynthesis; chorismate biosynthesis; chorismate from D-erythrose 4-phosphate and phosphoenolpyruvate: step 4/7. Its function is as follows. Involved in the biosynthesis of the chorismate, which leads to the biosynthesis of aromatic amino acids. Catalyzes the reversible NADPH linked reduction of 3-dehydroshikimate (DHSA) to yield shikimate (SA). In Dehalococcoides mccartyi (strain ATCC BAA-2100 / JCM 16839 / KCTC 5957 / BAV1), this protein is Shikimate dehydrogenase (NADP(+)).